We begin with the raw amino-acid sequence, 169 residues long: Disulfide bond formation protein B 1 (169 aa).

The Cytoplasmic portion of the chain corresponds to 1–14 (MSDNTLYLRREKRF). A helical transmembrane segment spans residues 15–31 (LVLLGIICLALIGGALY). Over 32–49 (MQIVLGEAPCPLCILQRY) the chain is Periplasmic. Cysteine 41 and cysteine 44 are oxidised to a cystine. A helical transmembrane segment spans residues 50-64 (ALLFIAIFAFIGAAM). The Cytoplasmic portion of the chain corresponds to 65 to 71 (SGRRGVT). Residues 72–89 (VCETLVTLSALGGIAAAG) form a helical membrane-spanning segment. The Periplasmic segment spans residues 90–144 (RHVWILAHPSDSCGIDVLQPIVDGLPLATLFPTGFQVSGFCTTPYPPVLGLSLAQ). Cysteine 102 and cysteine 130 are joined by a disulfide. Residues 145–163 (WALAAFVLTAVLVPACIIR) traverse the membrane as a helical segment. At 164–169 (NRRKPY) the chain is on the cytoplasmic side.

This sequence belongs to the DsbB family.

The protein localises to the cell inner membrane. Required for disulfide bond formation in some periplasmic proteins. Acts by oxidizing the DsbA protein. This Pseudomonas savastanoi pv. phaseolicola (strain 1448A / Race 6) (Pseudomonas syringae pv. phaseolicola (strain 1448A / Race 6)) protein is Disulfide bond formation protein B 1.